The following is a 279-amino-acid chain: uncharacterized protein (279 aa).

The protein to M.tuberculosis Rv2569c.

This is an uncharacterized protein from Mycobacterium leprae (strain TN).